Reading from the N-terminus, the 636-residue chain is Threonine--tRNA ligase (636 aa).

A TGS domain is found at 1 to 63 (MNEINVTLPD…ADGARVEIVT (63 aa)). The catalytic stretch occupies residues 243–534 (DHRKLGRELD…LIEHFAGNFP (292 aa)). C335, H386, and H511 together coordinate Zn(2+).

It belongs to the class-II aminoacyl-tRNA synthetase family. In terms of assembly, homodimer. Requires Zn(2+) as cofactor.

It is found in the cytoplasm. The catalysed reaction is tRNA(Thr) + L-threonine + ATP = L-threonyl-tRNA(Thr) + AMP + diphosphate + H(+). In terms of biological role, catalyzes the attachment of threonine to tRNA(Thr) in a two-step reaction: L-threonine is first activated by ATP to form Thr-AMP and then transferred to the acceptor end of tRNA(Thr). Also edits incorrectly charged L-seryl-tRNA(Thr). The polypeptide is Threonine--tRNA ligase (Geobacter sp. (strain M21)).